The primary structure comprises 1327 residues: Kinectin (1327 aa).

Residues 1 to 8 (MELYESTY) are Cytoplasmic-facing. A helical; Signal-anchor for type II membrane protein membrane pass occupies residues 9 to 29 (FIVLIPSVVITVIFLFFWLFM). The Lumenal portion of the chain corresponds to 30–1327 (KETLYDEVLA…EVNQQLTKET (1298 aa)). Disordered stretches follow at residues 49–181 (STKT…EQDK) and 197–216 (LSHQDTKQEGGLGKKKGLSK). Residue N69 is glycosylated (N-linked (GlcNAc...) asparagine). 2 stretches are compositionally biased toward basic and acidic residues: residues 73-86 (RESDSEHVPRDFKL) and 111-135 (VRERQKKEKKQKPSLEEQVIKESDA). Phosphoserine is present on residues S75 and S77. A compositionally biased stretch (basic residues) spans 163–173 (LKKKAGQKKSK). Residues 329 to 1327 (ELSGLLHQLQ…EVNQQLTKET (999 aa)) adopt a coiled-coil conformation. N1031 carries an N-linked (GlcNAc...) asparagine glycan. S1060 is modified (phosphoserine). An N-linked (GlcNAc...) asparagine glycan is attached at N1066. S1290 carries the phosphoserine modification.

The protein belongs to the kinectin family. As to expression, expressed in all tissues examined including 12-day embryo, adult heart, brain, ovary, kidney, lung, small intestine, spleen, thymus and pancreas.

Its subcellular location is the endoplasmic reticulum membrane. Its function is as follows. Receptor for kinesin thus involved in kinesin-driven vesicle motility. Accumulates in integrin-based adhesion complexes (IAC) upon integrin aggregation by fibronectin. This is Kinectin from Mus musculus (Mouse).